The sequence spans 494 residues: Endoglucanase 22 (494 aa).

Residues 1-21 (MKPLVCSFIVILLILLPTTIS) form the signal peptide. Aspartate 76 serves as the catalytic Nucleophile. Histidine 413 is a catalytic residue. A glycan (N-linked (GlcNAc...) asparagine) is linked at asparagine 468. The active site involves glutamate 473.

Belongs to the glycosyl hydrolase 9 (cellulase E) family.

Its subcellular location is the secreted. It carries out the reaction Endohydrolysis of (1-&gt;4)-beta-D-glucosidic linkages in cellulose, lichenin and cereal beta-D-glucans.. The sequence is that of Endoglucanase 22 (GH9B16) from Arabidopsis thaliana (Mouse-ear cress).